The following is a 465-amino-acid chain: MSLSLWQQCLARLQDELPATEFSMWIRPLQAELSDNTLALYAPNRFVLDWVRDKYLNNINVLLNDFCGMDAPLLRFEVGSKPLVQTISQPAQSHHNPVSVARQQPVRMAPVRPSWDNSPVQAEHTYRSNVNPKHTFDNFVEGKSNQLARAAARQVADNPGGAYNPLFLYGGTGLGKTHLLHAVGNGIIARKPNAKVVYMHSERFVQDMVKALQNNAIEEFKRYYRSVDALLIDDIQFFANKERSQEEFFHTFNALLEGNQQIILTSDRYPKEINGVEDRLKSRFGWGLTVAIEPPELETRVAILMKKADENDIRLPGEVAFFIAKRLRSNVRELEGALNRVIANANFTGRSITIDFVREALRDLLALQEKLVTIDNIQKTVAEYYKIKIADLLSKRRSRSVARPRQMAMALAKELTNHSLPEIGDAFGGRDHTTVLHACRKIEQLREESHDIKEDFSNLIRTLSS.

Positions 1 to 84 are domain I, interacts with DnaA modulators; sequence MSLSLWQQCL…RFEVGSKPLV (84 aa). The tract at residues 84–128 is domain II; the sequence is VQTISQPAQSHHNPVSVARQQPVRMAPVRPSWDNSPVQAEHTYRS. Residues 129–345 are domain III, AAA+ region; the sequence is NVNPKHTFDN…GALNRVIANA (217 aa). Residues glycine 173, glycine 175, lysine 176, and threonine 177 each contribute to the ATP site. The domain IV, binds dsDNA stretch occupies residues 346-465; that stretch reads NFTGRSITID…FSNLIRTLSS (120 aa).

Belongs to the DnaA family. As to quaternary structure, oligomerizes as a right-handed, spiral filament on DNA at oriC.

It is found in the cytoplasm. Functionally, plays an essential role in the initiation and regulation of chromosomal replication. ATP-DnaA binds to the origin of replication (oriC) to initiate formation of the DNA replication initiation complex once per cell cycle. Binds the DnaA box (a 9 base pair repeat at the origin) and separates the double-stranded (ds)DNA. Forms a right-handed helical filament on oriC DNA; dsDNA binds to the exterior of the filament while single-stranded (ss)DNA is stabiized in the filament's interior. The ATP-DnaA-oriC complex binds and stabilizes one strand of the AT-rich DNA unwinding element (DUE), permitting loading of DNA polymerase. After initiation quickly degrades to an ADP-DnaA complex that is not apt for DNA replication. Binds acidic phospholipids. The protein is Chromosomal replication initiator protein DnaA of Pectobacterium atrosepticum (strain SCRI 1043 / ATCC BAA-672) (Erwinia carotovora subsp. atroseptica).